The following is a 161-amino-acid chain: Cyclic pyranopterin monophosphate synthase (161 aa).

Substrate contacts are provided by residues 75–77 and 113–114; these read LCH and ME. Residue Asp-128 is part of the active site.

This sequence belongs to the MoaC family. As to quaternary structure, homohexamer; trimer of dimers.

It catalyses the reaction (8S)-3',8-cyclo-7,8-dihydroguanosine 5'-triphosphate = cyclic pyranopterin phosphate + diphosphate. Its pathway is cofactor biosynthesis; molybdopterin biosynthesis. Functionally, catalyzes the conversion of (8S)-3',8-cyclo-7,8-dihydroguanosine 5'-triphosphate to cyclic pyranopterin monophosphate (cPMP). In Erwinia tasmaniensis (strain DSM 17950 / CFBP 7177 / CIP 109463 / NCPPB 4357 / Et1/99), this protein is Cyclic pyranopterin monophosphate synthase.